Reading from the N-terminus, the 324-residue chain is UDP-N-acetylenolpyruvoylglucosamine reductase (324 aa).

Positions 39 to 220 (RTGGLAELFY…RAAMHEVALH (182 aa)) constitute an FAD-binding PCMH-type domain. Arginine 185 is a catalytic residue. Serine 234 functions as the Proton donor in the catalytic mechanism. Glutamate 304 is a catalytic residue.

The protein belongs to the MurB family. Requires FAD as cofactor.

It is found in the cytoplasm. The enzyme catalyses UDP-N-acetyl-alpha-D-muramate + NADP(+) = UDP-N-acetyl-3-O-(1-carboxyvinyl)-alpha-D-glucosamine + NADPH + H(+). It functions in the pathway cell wall biogenesis; peptidoglycan biosynthesis. Functionally, cell wall formation. This is UDP-N-acetylenolpyruvoylglucosamine reductase from Bartonella bacilliformis (strain ATCC 35685 / KC583 / Herrer 020/F12,63).